The following is a 461-amino-acid chain: ATP-dependent protease ATPase subunit HslU (461 aa).

ATP contacts are provided by residues Ile18, 60-65 (GVGKTE), Asp274, Glu339, and Arg411.

This sequence belongs to the ClpX chaperone family. HslU subfamily. As to quaternary structure, a double ring-shaped homohexamer of HslV is capped on each side by a ring-shaped HslU homohexamer. The assembly of the HslU/HslV complex is dependent on binding of ATP.

Its subcellular location is the cytoplasm. Its function is as follows. ATPase subunit of a proteasome-like degradation complex; this subunit has chaperone activity. The binding of ATP and its subsequent hydrolysis by HslU are essential for unfolding of protein substrates subsequently hydrolyzed by HslV. HslU recognizes the N-terminal part of its protein substrates and unfolds these before they are guided to HslV for hydrolysis. In Carboxydothermus hydrogenoformans (strain ATCC BAA-161 / DSM 6008 / Z-2901), this protein is ATP-dependent protease ATPase subunit HslU.